We begin with the raw amino-acid sequence, 659 residues long: MEEIKKRIIFLIDKINKTNYEYYTLNESSLNDQQYDALFRELLYLESKYPEYNYKFSPTTKIGGPISSKFHKFLHEKSMLSLNNVFNIKELKLFYDRISKKISNFTLLTELKIDGLAVSLKYKKGILDKAITRGDGYQGELITDNVKTIKELPLKLKEPLDLEVRGEVYMSYESFNYLNQIRKKENKSLFANPRNAASGTLRQLDSKVAAERNLSIFLYTIVNPPKFIITQKSILEFLTYLQFPVNNYYEYVLNWDQLIKKISYYEEIKNHLGYNTDGIVIKINELSFHSIIGYTSKAPKWAIAYKFKVFKTETLINNILFQIGRTGIVTPIAELLPTIVDGSVISKVNLHNFDYIKQKDIRVNDFVLVHKSGSIIPEIIEVIKTKRKNQIPFEMITHCYSCNTKLIKKDSNHFCFNLDCEEKKIQELFYFVSKSAMDINVLGLQTLKILFYKGFINNISDLYSLNQYKKEVEELHGFGKKKFNNIIISLEKSKNKCLSNFLIGLGIKNVGIHLAKILAQKFENIDNLQKASIESLLKIDEIGIKSAQNIKNFFLNSKNLKLIEKFKNLGLNLFYFKSKNNIKNNIFKNKKVIFTGILEKYSRNQAQNIVIELGGVIINSITNKTNYLILGKNPGSKLLKAKKFNIKVLQEHEFEELIK.

Residues 32 to 36 (DQQYD), 81 to 82 (SL), and Glu110 contribute to the NAD(+) site. The active-site N6-AMP-lysine intermediate is Lys112. NAD(+) contacts are provided by Arg133, Glu167, Lys282, and Lys306. Zn(2+) is bound by residues Cys399, Cys402, Cys415, and Cys420. In terms of domain architecture, BRCT spans 582–659 (IKNNIFKNKK…QEHEFEELIK (78 aa)).

This sequence belongs to the NAD-dependent DNA ligase family. LigA subfamily. Mg(2+) serves as cofactor. It depends on Mn(2+) as a cofactor.

It carries out the reaction NAD(+) + (deoxyribonucleotide)n-3'-hydroxyl + 5'-phospho-(deoxyribonucleotide)m = (deoxyribonucleotide)n+m + AMP + beta-nicotinamide D-nucleotide.. In terms of biological role, DNA ligase that catalyzes the formation of phosphodiester linkages between 5'-phosphoryl and 3'-hydroxyl groups in double-stranded DNA using NAD as a coenzyme and as the energy source for the reaction. It is essential for DNA replication and repair of damaged DNA. The protein is DNA ligase of Phytoplasma mali (strain AT).